The chain runs to 249 residues: Triosephosphate isomerase (249 aa).

2 residues coordinate substrate: Asn12 and Lys14. Lys14 carries the N6-acetyllysine modification. Position 21 is a phosphoserine (Ser21). Tyr68 is subject to 3'-nitrotyrosine. At Ser80 the chain carries Phosphoserine. His96 functions as the Electrophile in the catalytic mechanism. A Phosphoserine modification is found at Ser106. Lys142 participates in a covalent cross-link: Glycyl lysine isopeptide (Lys-Gly) (interchain with G-Cter in SUMO1). N6-succinyllysine is present on Lys149. Position 156 is an N6-acetyllysine; alternate (Lys156). Position 156 is an N6-succinyllysine; alternate (Lys156). The residue at position 159 (Ser159) is a Phosphoserine. The active-site Proton acceptor is Glu166. The residue at position 173 (Thr173) is a Phosphothreonine. Lys194 carries the N6-acetyllysine; alternate modification. Residue Lys194 is modified to N6-succinyllysine; alternate. Lys194 carries the post-translational modification N6-methyllysine; alternate. Ser198 is subject to Phosphoserine. The residue at position 209 (Tyr209) is a 3'-nitrotyrosine. Residue Ser212 is modified to Phosphoserine. Thr214 carries the phosphothreonine modification. Phosphoserine is present on Ser223. An N6-acetyllysine modification is found at Lys238.

The protein belongs to the triosephosphate isomerase family. Homodimer.

Its subcellular location is the cytoplasm. The enzyme catalyses D-glyceraldehyde 3-phosphate = dihydroxyacetone phosphate. The catalysed reaction is dihydroxyacetone phosphate = methylglyoxal + phosphate. Its pathway is carbohydrate degradation; glycolysis; D-glyceraldehyde 3-phosphate from glycerone phosphate: step 1/1. It participates in carbohydrate biosynthesis; gluconeogenesis. In terms of biological role, triosephosphate isomerase is an extremely efficient metabolic enzyme that catalyzes the interconversion between dihydroxyacetone phosphate (DHAP) and D-glyceraldehyde-3-phosphate (G3P) in glycolysis and gluconeogenesis. Functionally, it is also responsible for the non-negligible production of methylglyoxal a reactive cytotoxic side-product that modifies and can alter proteins, DNA and lipids. This Homo sapiens (Human) protein is Triosephosphate isomerase (TPI1).